The sequence spans 686 residues: tRNA wybutosine-synthesizing protein 4 (686 aa).

Over residues 1 to 10 the composition is skewed to basic and acidic residues; that stretch reads MGPRSRERRA. The disordered stretch occupies residues 1 to 21; it reads MGPRSRERRAGAVQNTNDSSA. Residues Arg-59, Gly-89, Asp-114, 161-162, and Glu-188 contribute to the S-adenosyl-L-methionine site; that span reads DL.

The protein belongs to the methyltransferase superfamily. LCMT family. In terms of assembly, interacts with RNF144B/IBRDC2.

It carries out the reaction 7-[(3S)-3-amino-3-carboxypropyl]wyosine(37) in tRNA(Phe) + S-adenosyl-L-methionine = 7-[(3S)-(3-amino-3-methoxycarbonyl)propyl]wyosine(37) in tRNA(Phe) + S-adenosyl-L-homocysteine. It catalyses the reaction 7-[(3S)-(3-amino-3-methoxycarbonyl)propyl]wyosine(37) in tRNA(Phe) + S-adenosyl-L-methionine + CO2 = wybutosine(37) in tRNA(Phe) + S-adenosyl-L-homocysteine + 2 H(+). It participates in tRNA modification; wybutosine-tRNA(Phe) biosynthesis. In terms of biological role, probable S-adenosyl-L-methionine-dependent methyltransferase that acts as a component of the wybutosine biosynthesis pathway. Wybutosine is a hyper modified guanosine with a tricyclic base found at the 3'-position adjacent to the anticodon of eukaryotic phenylalanine tRNA. May methylate the carboxyl group of leucine residues to form alpha-leucine ester residues. The protein is tRNA wybutosine-synthesizing protein 4 (LCMT2) of Homo sapiens (Human).